Consider the following 403-residue polypeptide: MALNTSAEAPLPVGEVSRLIGGWIDRLGAIWVEGQITQLSRRPGAGVVFLTLRDPSHDISVSVTCFRQVFDRIADVVTEGARVVVLAKPEWYAPRGQLSLRATDIRPVGIGELLVRLEQLKKSLAAEGLFALDRKKPLPFLPQLVGLVCGRASAAERDVLENARRRWPAVRFEVRNTAVQGVNAVAQVVQAVEELDALQEVDVIVVARGGGSVEDLLPFSDEQLIRTVAACRTPVVSAIGHEPDSPLLDLVADLRASTPTDAAKKVVPDVGEELERVQQLRDRALRTVRGLLDREERGLAHALGRPAMERPHRLVDEREAEVDALLGRARRVLGHLLDRADSELSHTLARVVSLSPAATLERGYAVLQRPDGHVVRSPEEAGAPGEPLRARVSEGEFTVRVDG.

This sequence belongs to the XseA family. As to quaternary structure, heterooligomer composed of large and small subunits.

The protein localises to the cytoplasm. It carries out the reaction Exonucleolytic cleavage in either 5'- to 3'- or 3'- to 5'-direction to yield nucleoside 5'-phosphates.. Bidirectionally degrades single-stranded DNA into large acid-insoluble oligonucleotides, which are then degraded further into small acid-soluble oligonucleotides. The polypeptide is Exodeoxyribonuclease 7 large subunit (Streptomyces griseus subsp. griseus (strain JCM 4626 / CBS 651.72 / NBRC 13350 / KCC S-0626 / ISP 5235)).